The chain runs to 198 residues: Na(+)-translocating NADH-quinone reductase subunit E (198 aa).

The next 6 helical transmembrane spans lie at 11–31 (SVFI…FLAV), 35–55 (VSTA…AVPV), 77–97 (FLNF…LEMV), 110–130 (GIFL…SFMV), 140–160 (VVYG…LAGI), and 176–196 (LGIT…FSGI).

It belongs to the NqrDE/RnfAE family. As to quaternary structure, composed of six subunits; NqrA, NqrB, NqrC, NqrD, NqrE and NqrF.

It is found in the cell inner membrane. The enzyme catalyses a ubiquinone + n Na(+)(in) + NADH + H(+) = a ubiquinol + n Na(+)(out) + NAD(+). NQR complex catalyzes the reduction of ubiquinone-1 to ubiquinol by two successive reactions, coupled with the transport of Na(+) ions from the cytoplasm to the periplasm. NqrA to NqrE are probably involved in the second step, the conversion of ubisemiquinone to ubiquinol. In Pasteurella multocida (strain Pm70), this protein is Na(+)-translocating NADH-quinone reductase subunit E.